The sequence spans 198 residues: Penicillin-binding protein activator LpoB (198 aa).

A signal peptide spans 1-20; it reads MSWIRIRRSGVLLLALVLSG. Residue Cys21 is the site of N-palmitoyl cysteine attachment. Cys21 is lipidated: S-diacylglycerol cysteine. Positions 28–62 are disordered; that stretch reads PQPAAPVEPVTPPVNVPQPPKAEPGQNVPPPPKMQ. The span at 30–61 shows a compositional bias: pro residues; the sequence is PAAPVEPVTPPVNVPQPPKAEPGQNVPPPPKM.

Belongs to the LpoB family. Interacts with PBP1b.

Its subcellular location is the cell outer membrane. Regulator of peptidoglycan synthesis that is essential for the function of penicillin-binding protein 1B (PBP1b). This chain is Penicillin-binding protein activator LpoB, found in Erwinia amylovora (strain CFBP1430).